The sequence spans 265 residues: Cytochrome c oxidase subunit 3 (265 aa).

A run of 6 helical transmembrane segments spans residues 41–61 (GGAT…FVWW), 85–105 (GFIL…WAFF), 137–157 (TLIL…ILAG), 162–182 (AVYA…FQGM), 200–220 (FFLA…FLIV), and 245–265 (WHFV…WGGI).

The protein belongs to the cytochrome c oxidase subunit 3 family. Component of the cytochrome c oxidase (complex IV, CIV), a multisubunit enzyme composed of a catalytic core of 3 subunits and several supernumerary subunits. The complex exists as a monomer or a dimer and forms supercomplexes (SCs) in the inner mitochondrial membrane with ubiquinol-cytochrome c oxidoreductase (cytochrome b-c1 complex, complex III, CIII).

The protein resides in the mitochondrion inner membrane. The enzyme catalyses 4 Fe(II)-[cytochrome c] + O2 + 8 H(+)(in) = 4 Fe(III)-[cytochrome c] + 2 H2O + 4 H(+)(out). In terms of biological role, component of the cytochrome c oxidase, the last enzyme in the mitochondrial electron transport chain which drives oxidative phosphorylation. The respiratory chain contains 3 multisubunit complexes succinate dehydrogenase (complex II, CII), ubiquinol-cytochrome c oxidoreductase (cytochrome b-c1 complex, complex III, CIII) and cytochrome c oxidase (complex IV, CIV), that cooperate to transfer electrons derived from NADH and succinate to molecular oxygen, creating an electrochemical gradient over the inner membrane that drives transmembrane transport and the ATP synthase. Cytochrome c oxidase is the component of the respiratory chain that catalyzes the reduction of oxygen to water. Electrons originating from reduced cytochrome c in the intermembrane space (IMS) are transferred via the dinuclear copper A center (CU(A)) of subunit 2 and heme A of subunit 1 to the active site in subunit 1, a binuclear center (BNC) formed by heme A3 and copper B (CU(B)). The BNC reduces molecular oxygen to 2 water molecules using 4 electrons from cytochrome c in the IMS and 4 protons from the mitochondrial matrix. This Triticum aestivum (Wheat) protein is Cytochrome c oxidase subunit 3 (COX3).